Here is a 585-residue protein sequence, read N- to C-terminus: Trehalase (585 aa).

Positions 1–32 (MAKTTPMAKPSVGLLTLQVLVFCALTGSLASA) are cleaved as a signal peptide. Substrate-binding positions include R184 and 191-192 (WD). The N-linked (GlcNAc...) asparagine glycan is linked to N207. Residues N228, 237–239 (RSQ), 302–304 (RPE), and G336 each bind substrate. Catalysis depends on D338, which acts as the Proton donor/acceptor. A glycan (N-linked (GlcNAc...) asparagine) is linked at N348. Catalysis depends on E535, which acts as the Proton donor/acceptor. E550 is a binding site for substrate.

This sequence belongs to the glycosyl hydrolase 37 family. As to expression, expressed by the venom gland.

The protein resides in the secreted. It carries out the reaction alpha,alpha-trehalose + H2O = alpha-D-glucose + beta-D-glucose. The polypeptide is Trehalase (tre1) (Pimpla hypochondriaca (Parasitoid wasp)).